The following is a 465-amino-acid chain: Ribulose bisphosphate carboxylase large chain (465 aa).

Residue Lys4 is modified to N6,N6,N6-trimethyllysine. The substrate site is built by Asn113 and Thr163. Residue Lys165 is the Proton acceptor of the active site. A substrate-binding site is contributed by Lys167. Positions 191, 193, and 194 each coordinate Mg(2+). Lys191 carries the post-translational modification N6-carboxylysine. Residue His284 is the Proton acceptor of the active site. Substrate contacts are provided by Arg285, His317, and Ser369.

It belongs to the RuBisCO large chain family. Type I subfamily. Heterohexadecamer of 8 large chains and 8 small chains; disulfide-linked. The disulfide link is formed within the large subunit homodimers. The cofactor is Mg(2+). In terms of processing, the disulfide bond which can form in the large chain dimeric partners within the hexadecamer appears to be associated with oxidative stress and protein turnover.

The protein localises to the plastid. The protein resides in the chloroplast. The enzyme catalyses 2 (2R)-3-phosphoglycerate + 2 H(+) = D-ribulose 1,5-bisphosphate + CO2 + H2O. The catalysed reaction is D-ribulose 1,5-bisphosphate + O2 = 2-phosphoglycolate + (2R)-3-phosphoglycerate + 2 H(+). Functionally, ruBisCO catalyzes two reactions: the carboxylation of D-ribulose 1,5-bisphosphate, the primary event in carbon dioxide fixation, as well as the oxidative fragmentation of the pentose substrate in the photorespiration process. Both reactions occur simultaneously and in competition at the same active site. The sequence is that of Ribulose bisphosphate carboxylase large chain from Securidaca diversifolia (Easter flower).